The chain runs to 199 residues: MQIILLERIEKLGAIGDEVTVKDGYARNFLLPNKKALRANEANRKVFEANRARIEAENAARRDEAQNESGNVEGKEVVLIRASSNAGQLYGSVSVRDISDALAEQGAKVTKSMIVLERPIKTIGVYDVRVSLHPEVSVTVKVNVARSPDEAELQSKGVNVIDAMFDNETGGFTEEYDPNAEPGEIPTELLEGGEEAAEA.

The disordered stretch occupies residues 169 to 199; that stretch reads TGGFTEEYDPNAEPGEIPTELLEGGEEAAEA.

This sequence belongs to the bacterial ribosomal protein bL9 family.

In terms of biological role, binds to the 23S rRNA. This Novosphingobium aromaticivorans (strain ATCC 700278 / DSM 12444 / CCUG 56034 / CIP 105152 / NBRC 16084 / F199) protein is Large ribosomal subunit protein bL9.